We begin with the raw amino-acid sequence, 570 residues long: Proline--tRNA ligase (570 aa).

Belongs to the class-II aminoacyl-tRNA synthetase family. ProS type 1 subfamily. Homodimer.

The protein localises to the cytoplasm. The catalysed reaction is tRNA(Pro) + L-proline + ATP = L-prolyl-tRNA(Pro) + AMP + diphosphate. Functionally, catalyzes the attachment of proline to tRNA(Pro) in a two-step reaction: proline is first activated by ATP to form Pro-AMP and then transferred to the acceptor end of tRNA(Pro). As ProRS can inadvertently accommodate and process non-cognate amino acids such as alanine and cysteine, to avoid such errors it has two additional distinct editing activities against alanine. One activity is designated as 'pretransfer' editing and involves the tRNA(Pro)-independent hydrolysis of activated Ala-AMP. The other activity is designated 'posttransfer' editing and involves deacylation of mischarged Ala-tRNA(Pro). The misacylated Cys-tRNA(Pro) is not edited by ProRS. The protein is Proline--tRNA ligase of Neisseria meningitidis serogroup A / serotype 4A (strain DSM 15465 / Z2491).